Consider the following 373-residue polypeptide: Putative protein YfkA (373 aa).

Residues 26 to 256 (YGDMQLTNVE…DIRDENTWML (231 aa)) form the Radical SAM core domain. [4Fe-4S] cluster contacts are provided by Cys42, Cys46, and Cys49.

It belongs to the radical SAM superfamily. The cofactor is [4Fe-4S] cluster.

This Bacillus subtilis (strain 168) protein is Putative protein YfkA (yfkA).